Consider the following 1401-residue polypeptide: Kinesin-like protein KIF27 (1401 aa).

The region spanning 5–341 (PVKVAVRIRP…LKYANRARNI (337 aa)) is the Kinesin motor domain. 84 to 91 (GQTGSGKT) serves as a coordination point for ATP. Coiled-coil stretches lie at residues 352–413 (ESDR…GYQC) and 489–557 (LAAD…KLNL). Serine 643, serine 646, serine 672, serine 675, and serine 704 each carry phosphoserine. Positions 643 to 662 (SDNSDDEESEGQEKSGTRCR) are disordered. 4 coiled-coil regions span residues 705-886 (QELN…IQLK), 916-1070 (DHLQ…AAIE), 1118-1154 (NKVV…LESA), and 1190-1219 (EGIM…TSRD). A Phosphoserine modification is found at serine 999. The span at 1259-1280 (EELKWASRPESMKLSGREREMD) shows a compositional bias: basic and acidic residues. The disordered stretch occupies residues 1259–1332 (EELKWASRPE…TETDDNQFTK (74 aa)). Residues 1281–1292 (SSASSLRTQPNP) are compositionally biased toward polar residues. 2 positions are modified to phosphoserine: serine 1367 and serine 1389.

It belongs to the TRAFAC class myosin-kinesin ATPase superfamily. Kinesin family. KIF27 subfamily. Interacts with STK36. As to expression, testis, pancreatic islet, germ cell tumors and Jurkat T-cells.

The protein localises to the cytoplasm. It localises to the cytoskeleton. The protein resides in the cell projection. It is found in the cilium. Functionally, plays an essential role in motile ciliogenesis. This chain is Kinesin-like protein KIF27 (KIF27), found in Homo sapiens (Human).